A 668-amino-acid polypeptide reads, in one-letter code: DNA ligase (668 aa).

NAD(+) contacts are provided by residues 34–38 (DAEYD), 83–84 (SL), and Glu-117. Lys-119 (N6-AMP-lysine intermediate) is an active-site residue. Residues Arg-140, Glu-177, Lys-293, and Lys-317 each contribute to the NAD(+) site. Zn(2+)-binding residues include Cys-411, Cys-414, Cys-429, and Cys-434. In terms of domain architecture, BRCT spans 591 to 668 (RVGGRFTGKT…SEDDFLELMQ (78 aa)).

Belongs to the NAD-dependent DNA ligase family. LigA subfamily. The cofactor is Mg(2+). Requires Mn(2+) as cofactor.

The enzyme catalyses NAD(+) + (deoxyribonucleotide)n-3'-hydroxyl + 5'-phospho-(deoxyribonucleotide)m = (deoxyribonucleotide)n+m + AMP + beta-nicotinamide D-nucleotide.. Functionally, DNA ligase that catalyzes the formation of phosphodiester linkages between 5'-phosphoryl and 3'-hydroxyl groups in double-stranded DNA using NAD as a coenzyme and as the energy source for the reaction. It is essential for DNA replication and repair of damaged DNA. This is DNA ligase from Citrifermentans bemidjiense (strain ATCC BAA-1014 / DSM 16622 / JCM 12645 / Bem) (Geobacter bemidjiensis).